The following is a 295-amino-acid chain: bZIP transcription factor RISBZ5 (295 aa).

Over residues Arg16–Pro26 the composition is skewed to basic and acidic residues. The tract at residues Arg16–Ala157 is disordered. Over residues Ser109–Leu119 the composition is skewed to acidic residues. Positions Glu120–Lys136 are enriched in basic and acidic residues. Residues Glu134–Leu197 enclose the bZIP domain. Residues Lys136 to Lys155 are basic motif. A leucine-zipper region spans residues Leu162–Leu176.

As to quaternary structure, homodimer.

Its subcellular location is the nucleus. In terms of biological role, probable transcription factor that binds to the DNA specific sequence 5'-TGAGTCA-3' found in seed storage protein gene promoters. May function as a negative regulator in cold and drought stress responses. This is bZIP transcription factor RISBZ5 from Oryza sativa subsp. japonica (Rice).